The primary structure comprises 429 residues: Ribosomal RNA small subunit methyltransferase B (429 aa).

S-adenosyl-L-methionine-binding positions include 254-260, Asp277, Asp303, and Asp322; that span reads CAAPGGK. Cys375 (nucleophile) is an active-site residue.

This sequence belongs to the class I-like SAM-binding methyltransferase superfamily. RsmB/NOP family.

The protein localises to the cytoplasm. It catalyses the reaction cytidine(967) in 16S rRNA + S-adenosyl-L-methionine = 5-methylcytidine(967) in 16S rRNA + S-adenosyl-L-homocysteine + H(+). Specifically methylates the cytosine at position 967 (m5C967) of 16S rRNA. In Photorhabdus laumondii subsp. laumondii (strain DSM 15139 / CIP 105565 / TT01) (Photorhabdus luminescens subsp. laumondii), this protein is Ribosomal RNA small subunit methyltransferase B.